The sequence spans 71 residues: Probable ribosome maturation protein RlbA (71 aa).

The S4 RNA-binding domain maps to 12 to 69 (ITLGQFLKLADVIQSGGMAKWFLSEHEVLVNDEPDNRRGRKLYVGDVVEIEGFGSFQV).

May assist in the assembly of the 50S subunit. The protein is Probable ribosome maturation protein RlbA of Bacillus subtilis (strain 168).